We begin with the raw amino-acid sequence, 124 residues long: Small ribosomal subunit protein uS13 (124 aa).

Residues 95-124 form a disordered region; it reads GLPVRGQRTKTNARTRKGPKRTIAGKKKAR.

Belongs to the universal ribosomal protein uS13 family. Part of the 30S ribosomal subunit. Forms a loose heterodimer with protein S19. Forms two bridges to the 50S subunit in the 70S ribosome.

Functionally, located at the top of the head of the 30S subunit, it contacts several helices of the 16S rRNA. In the 70S ribosome it contacts the 23S rRNA (bridge B1a) and protein L5 of the 50S subunit (bridge B1b), connecting the 2 subunits; these bridges are implicated in subunit movement. Contacts the tRNAs in the A and P-sites. The protein is Small ribosomal subunit protein uS13 of Mycobacteroides abscessus (strain ATCC 19977 / DSM 44196 / CCUG 20993 / CIP 104536 / JCM 13569 / NCTC 13031 / TMC 1543 / L948) (Mycobacterium abscessus).